We begin with the raw amino-acid sequence, 453 residues long: Homogentisate 1,2-dioxygenase (453 aa).

Residues 1-12 (MLEKAERQRKAA) are compositionally biased toward basic and acidic residues. The segment at 1-43 (MLEKAERQRKAAPDQQRSAGYMPGFGNDFETESLPGSLPQGQN) is disordered. The active-site Proton acceptor is His306. Positions 349 and 355 each coordinate Fe cation. Tyr364 and His385 together coordinate homogentisate. A Fe cation-binding site is contributed by His385.

Belongs to the homogentisate dioxygenase family. Hexamer; dimer of trimers. Requires Fe cation as cofactor.

The catalysed reaction is homogentisate + O2 = 4-maleylacetoacetate + H(+). Its pathway is amino-acid degradation; L-phenylalanine degradation; acetoacetate and fumarate from L-phenylalanine: step 4/6. Functionally, involved in the catabolism of homogentisate (2,5-dihydroxyphenylacetate or 2,5-OH-PhAc), a central intermediate in the degradation of phenylalanine and tyrosine. Catalyzes the oxidative ring cleavage of the aromatic ring of homogentisate to yield maleylacetoacetate. This chain is Homogentisate 1,2-dioxygenase, found in Sinorhizobium medicae (strain WSM419) (Ensifer medicae).